A 143-amino-acid chain; its full sequence is Heat shock protein Hsp-16.48/Hsp-16.49 (143 aa).

Positions 35 to 140 (HNSFNFSDNI…SSRSIPINFV (106 aa)) constitute a sHSP domain.

The protein belongs to the small heat shock protein (HSP20) family.

The sequence is that of Heat shock protein Hsp-16.48/Hsp-16.49 (hsp-16.48) from Caenorhabditis elegans.